We begin with the raw amino-acid sequence, 689 residues long: Glycine--tRNA ligase beta subunit (689 aa).

This sequence belongs to the class-II aminoacyl-tRNA synthetase family. Tetramer of two alpha and two beta subunits.

The protein localises to the cytoplasm. It carries out the reaction tRNA(Gly) + glycine + ATP = glycyl-tRNA(Gly) + AMP + diphosphate. This Coxiella burnetii (strain RSA 493 / Nine Mile phase I) protein is Glycine--tRNA ligase beta subunit (glyS).